A 432-amino-acid chain; its full sequence is Lipoyl synthase, mitochondrial (432 aa).

A compositionally biased stretch (low complexity) spans 32–68 (TLGATPGSTSTSTSTSTATTTTLESTSTSTSGDATET). Residues 32 to 71 (TLGATPGSTSTSTSTSTATTTTLESTSTSTSGDATETTIK) are disordered. Residues Cys150, Cys155, Cys161, Cys180, Cys184, Cys187, and Ser395 each contribute to the [4Fe-4S] cluster site. Positions 165 to 384 (KKSEATATIM…RDVALEMGFL (220 aa)) constitute a Radical SAM core domain.

It belongs to the radical SAM superfamily. Lipoyl synthase family. Requires [4Fe-4S] cluster as cofactor.

Its subcellular location is the mitochondrion. It catalyses the reaction [[Fe-S] cluster scaffold protein carrying a second [4Fe-4S](2+) cluster] + N(6)-octanoyl-L-lysyl-[protein] + 2 oxidized [2Fe-2S]-[ferredoxin] + 2 S-adenosyl-L-methionine + 4 H(+) = [[Fe-S] cluster scaffold protein] + N(6)-[(R)-dihydrolipoyl]-L-lysyl-[protein] + 4 Fe(3+) + 2 hydrogen sulfide + 2 5'-deoxyadenosine + 2 L-methionine + 2 reduced [2Fe-2S]-[ferredoxin]. The protein operates within protein modification; protein lipoylation via endogenous pathway; protein N(6)-(lipoyl)lysine from octanoyl-[acyl-carrier-protein]: step 2/2. Catalyzes the radical-mediated insertion of two sulfur atoms into the C-6 and C-8 positions of the octanoyl moiety bound to the lipoyl domains of lipoate-dependent enzymes, thereby converting the octanoylated domains into lipoylated derivatives. This Lodderomyces elongisporus (strain ATCC 11503 / CBS 2605 / JCM 1781 / NBRC 1676 / NRRL YB-4239) (Yeast) protein is Lipoyl synthase, mitochondrial.